A 374-amino-acid chain; its full sequence is tRNA-specific 2-thiouridylase MnmA (374 aa).

ATP contacts are provided by residues 10–17 (AMSGGVDS) and Leu36. The active-site Nucleophile is Cys111. Cys111 and Cys209 form a disulfide bridge. Position 135 (Gly135) interacts with ATP. Residues 159-161 (KDQ) are interaction with tRNA. Cys209 functions as the Cysteine persulfide intermediate in the catalytic mechanism.

The protein belongs to the MnmA/TRMU family.

It localises to the cytoplasm. The catalysed reaction is S-sulfanyl-L-cysteinyl-[protein] + uridine(34) in tRNA + AH2 + ATP = 2-thiouridine(34) in tRNA + L-cysteinyl-[protein] + A + AMP + diphosphate + H(+). Its function is as follows. Catalyzes the 2-thiolation of uridine at the wobble position (U34) of tRNA, leading to the formation of s(2)U34. This Acidobacterium capsulatum (strain ATCC 51196 / DSM 11244 / BCRC 80197 / JCM 7670 / NBRC 15755 / NCIMB 13165 / 161) protein is tRNA-specific 2-thiouridylase MnmA.